The chain runs to 219 residues: Steroid receptor RNA activator 1 (219 aa).

Disordered stretches follow at residues 1 to 90 (MAEL…SSPV) and 192 to 219 (SLSS…QPSS). The span at 23-32 (YGLQTQTGGT) shows a compositional bias: polar residues. A Phosphoserine modification is found at serine 48. Residues 55-76 (SGPPPVDHPPPSSKASRPPPMG) are compositionally biased toward pro residues. Over residues 192 to 203 (SLSSEENKEEKS) the composition is skewed to basic and acidic residues. Residues 206 to 219 (APENQTIPGFQPSS) show a composition bias toward polar residues.

It belongs to the SRA1 family. In terms of assembly, SRA1 RNA exists in a ribonucleoprotein complex containing NCOA1. The RNA also forms a complex with PUS1 and RARG in the nucleus. Interacts with AR. Expressed in various prostate cancer cell lines.

The protein localises to the nucleus. Its subcellular location is the cytoplasm. In terms of biological role, functional RNA which acts as a transcriptional coactivator that selectively enhances steroid receptor-mediated transactivation ligand-independently through a mechanism involving the modulating N-terminal domain (AF-1) of steroid receptors. Also mediates transcriptional coactivation of steroid receptors ligand-dependently through the steroid-binding domain (AF-2). Enhances cellular proliferation and differentiation and promotes apoptosis in vivo. May play a role in tumorigenesis. This is Steroid receptor RNA activator 1 from Rattus norvegicus (Rat).